Here is a 551-residue protein sequence, read N- to C-terminus: E-selectin (551 aa).

An N-terminal signal peptide occupies residues 1–23 (MVASWLLSTLTFALVLLIKETST). Residues 24 to 141 (WTYHFSAENM…CSKKKLALCY (118 aa)) enclose the C-type lectin domain. Residues 24–495 (WTYHFSAENM…CEEPIASNVP (472 aa)) lie on the Extracellular side of the membrane. N-linked (GlcNAc...) asparagine glycosylation is found at Asn-32 and Asn-45. Intrachain disulfides connect Cys-42-Cys-140, Cys-113-Cys-132, Cys-145-Cys-156, Cys-150-Cys-165, Cys-167-Cys-176, Cys-182-Cys-226, Cys-195-Cys-208, Cys-212-Cys-239, Cys-244-Cys-288, Cys-257-Cys-270, Cys-274-Cys-301, Cys-306-Cys-351, Cys-337-Cys-364, Cys-369-Cys-414, Cys-400-Cys-427, Cys-432-Cys-473, and Cys-459-Cys-486. Residues Glu-103, Asn-105, and Glu-111 each coordinate Ca(2+). A carbohydrate is bound by residues 103 to 111 (EPNNKQNNE), 115 to 120 (EIYIKR), and 128 to 130 (NDE). Residues Asn-128 and Asp-129 each coordinate Ca(2+). In terms of domain architecture, EGF-like spans 142 to 177 (TAACTEASCSGHGECIETINNYSCKCYPGFSGLKCE). The N-linked (GlcNAc...) asparagine glycan is linked to Asn-162. 5 Sushi domains span residues 180-241 (VTCE…TCKV), 242-303 (VECD…TCKA), 305-366 (SCDT…VCEA), 368-429 (KCDP…SCQV), and 430-488 (VQCP…TCEE). N-linked (GlcNAc...) asparagine glycosylation is found at Asn-194, Asn-201, and Asn-205. Asn-267 carries an N-linked (GlcNAc...) asparagine glycan. N-linked (GlcNAc...) asparagine glycosylation is found at Asn-314, Asn-321, and Asn-334. 2 N-linked (GlcNAc...) asparagine glycosylation sites follow: Asn-442 and Asn-466. Residues 496 to 517 (LAVGLSVSGTSFLTLTSFLLWF) traverse the membrane as a helical segment. The Cytoplasmic portion of the chain corresponds to 518 to 551 (LKYFRKKAKKFVPASSRYVGLEAHGNCQVPSHLI).

It belongs to the selectin/LECAM family. As to quaternary structure, interacts with SELPLG/PSGL1 and PODXL2 through the sialyl Lewis X epitope. SELPLG sulfation appears not to be required for this interaction.

Its subcellular location is the cell membrane. In terms of biological role, cell-surface glycoprotein having a role in immunoadhesion. Mediates in the adhesion of blood neutrophils in cytokine-activated endothelium through interaction with SELPLG/PSGL1. May have a role in capillary morphogenesis. This is E-selectin (SELE) from Oryctolagus cuniculus (Rabbit).